Consider the following 195-residue polypeptide: Imidazoleglycerol-phosphate dehydratase (195 aa).

It belongs to the imidazoleglycerol-phosphate dehydratase family.

The protein resides in the cytoplasm. It catalyses the reaction D-erythro-1-(imidazol-4-yl)glycerol 3-phosphate = 3-(imidazol-4-yl)-2-oxopropyl phosphate + H2O. Its pathway is amino-acid biosynthesis; L-histidine biosynthesis; L-histidine from 5-phospho-alpha-D-ribose 1-diphosphate: step 6/9. This chain is Imidazoleglycerol-phosphate dehydratase, found in Geobacillus sp. (strain WCH70).